Reading from the N-terminus, the 351-residue chain is Cell shape-determining protein MreB (351 aa).

ATP-binding positions include 20 to 22 (TAN), 169 to 171 (GGT), 217 to 220 (ERIK), and 299 to 302 (GGAL).

It belongs to the FtsA/MreB family. Forms polymers.

The protein localises to the cytoplasm. Functionally, forms membrane-associated dynamic filaments that are essential for cell shape determination. Acts by regulating cell wall synthesis and cell elongation, and thus cell shape. A feedback loop between cell geometry and MreB localization may maintain elongated cell shape by targeting cell wall growth to regions of negative cell wall curvature. The chain is Cell shape-determining protein MreB from Haemophilus influenzae (strain ATCC 51907 / DSM 11121 / KW20 / Rd).